The chain runs to 221 residues: Thiamine-phosphate synthase (221 aa).

4-amino-2-methyl-5-(diphosphooxymethyl)pyrimidine is bound by residues 46–50 and asparagine 82; that span reads QFREK. Residues aspartate 83 and aspartate 102 each contribute to the Mg(2+) site. 4-amino-2-methyl-5-(diphosphooxymethyl)pyrimidine is bound at residue serine 121. 148-150 serves as a coordination point for 2-[(2R,5Z)-2-carboxy-4-methylthiazol-5(2H)-ylidene]ethyl phosphate; it reads TQS. Lysine 151 provides a ligand contact to 4-amino-2-methyl-5-(diphosphooxymethyl)pyrimidine. 2-[(2R,5Z)-2-carboxy-4-methylthiazol-5(2H)-ylidene]ethyl phosphate contacts are provided by residues glycine 180 and 200–201; that span reads IS.

The protein belongs to the thiamine-phosphate synthase family. It depends on Mg(2+) as a cofactor.

It catalyses the reaction 2-[(2R,5Z)-2-carboxy-4-methylthiazol-5(2H)-ylidene]ethyl phosphate + 4-amino-2-methyl-5-(diphosphooxymethyl)pyrimidine + 2 H(+) = thiamine phosphate + CO2 + diphosphate. The catalysed reaction is 2-(2-carboxy-4-methylthiazol-5-yl)ethyl phosphate + 4-amino-2-methyl-5-(diphosphooxymethyl)pyrimidine + 2 H(+) = thiamine phosphate + CO2 + diphosphate. The enzyme catalyses 4-methyl-5-(2-phosphooxyethyl)-thiazole + 4-amino-2-methyl-5-(diphosphooxymethyl)pyrimidine + H(+) = thiamine phosphate + diphosphate. Its pathway is cofactor biosynthesis; thiamine diphosphate biosynthesis; thiamine phosphate from 4-amino-2-methyl-5-diphosphomethylpyrimidine and 4-methyl-5-(2-phosphoethyl)-thiazole: step 1/1. Functionally, condenses 4-methyl-5-(beta-hydroxyethyl)thiazole monophosphate (THZ-P) and 2-methyl-4-amino-5-hydroxymethyl pyrimidine pyrophosphate (HMP-PP) to form thiamine monophosphate (TMP). This chain is Thiamine-phosphate synthase, found in Pasteurella multocida (strain Pm70).